Consider the following 305-residue polypeptide: Heme A synthase (305 aa).

Residues Met1 to Lys6 lie on the Cytoplasmic side of the membrane. A helical transmembrane segment spans residues Val7–Thr27. Residues Lys28–Arg63 are Extracellular-facing. A disulfide bridge connects residues Cys35 and Cys42. Glu59 is a catalytic residue. His62 contacts heme o. Residues Met64 to Met84 traverse the membrane as a helical segment. Residues Lys85–Pro92 lie on the Cytoplasmic side of the membrane. A helical transmembrane segment spans residues Leu93 to Val113. Residues Trp114 to Ala122 lie on the Extracellular side of the membrane. A helical transmembrane segment spans residues Leu123–Phe143. His124 is a heme o binding site. Over Glu144 to Leu160 the chain is Cytoplasmic. A helical transmembrane segment spans residues Arg161–Val181. Residues Arg182–Tyr212 are Extracellular-facing. Residues Phe213 to Phe233 traverse the membrane as a helical segment. Residue His214 coordinates heme b. Residues Arg234–Arg240 are Cytoplasmic-facing. Residues Val241–Ala261 traverse the membrane as a helical segment. Residues Leu262–Tyr271 are Extracellular-facing. Residues Ile272–Leu292 form a helical membrane-spanning segment. His276 contributes to the heme b binding site. Topologically, residues Leu293–Lys305 are cytoplasmic.

It belongs to the COX15/CtaA family. Type 1 subfamily. Interacts with CtaB. Heme b serves as cofactor.

Its subcellular location is the cell membrane. It carries out the reaction Fe(II)-heme o + 2 A + H2O = Fe(II)-heme a + 2 AH2. It functions in the pathway porphyrin-containing compound metabolism; heme A biosynthesis; heme A from heme O: step 1/1. Functionally, catalyzes the conversion of heme O to heme A by two successive hydroxylations of the methyl group at C8. The first hydroxylation forms heme I, the second hydroxylation results in an unstable dihydroxymethyl group, which spontaneously dehydrates, resulting in the formyl group of heme A. This chain is Heme A synthase, found in Listeria monocytogenes serovar 1/2a (strain ATCC BAA-679 / EGD-e).